Consider the following 440-residue polypeptide: Tryptophan aminotransferase-related protein 2 (440 aa).

The chain crosses the membrane as a helical span at residues 7–26; it reads FLSWRNMLVLSLAINFSLIL. Residues Tyr112, 154–155, Asn222, 242–245, 265–268, and Arg276 each bind pyridoxal 5'-phosphate; these read ST, DLAY, and TASK. N6-(pyridoxal phosphate)lysine is present on Lys268.

The protein belongs to the alliinase family. Requires pyridoxal 5'-phosphate as cofactor. As to expression, expressed in roots, cotyledons and in the apical parts of hypocotyls. In roots, restricted to the provasculature of meristematic regions. Detected on the inner side of the apical hooks.

The protein resides in the membrane. It carries out the reaction L-tryptophan + 2-oxoglutarate = indole-3-pyruvate + L-glutamate. It catalyses the reaction L-tryptophan + pyruvate = indole-3-pyruvate + L-alanine. The protein operates within plant hormone metabolism; auxin biosynthesis. With respect to regulation, inhibited by L-kynurenine. In terms of biological role, involved in auxin production. Both TAA1 and TAR2 are required for maintaining proper auxin levels in roots, while TAA1, TAR1 and TAR2 are required for proper embryo patterning. Involved in the maintenance of the root stem cell niches. The chain is Tryptophan aminotransferase-related protein 2 (TAR2) from Arabidopsis thaliana (Mouse-ear cress).